Here is a 183-residue protein sequence, read N- to C-terminus: Ribulose bisphosphate carboxylase small subunit, chloroplastic 3 (183 aa).

The transit peptide at 1-57 directs the protein to the chloroplast; the sequence is MASSLMSNAATTMAAATTTAQANMVAPFNGLKSVSAFPVTRKNNDITSVASNGGRVQ.

This sequence belongs to the RuBisCO small chain family. As to quaternary structure, heterohexadecamer of 8 large and 8 small subunits.

The protein localises to the plastid. The protein resides in the chloroplast. Functionally, ruBisCO catalyzes two reactions: the carboxylation of D-ribulose 1,5-bisphosphate, the primary event in carbon dioxide fixation, as well as the oxidative fragmentation of the pentose substrate. Both reactions occur simultaneously and in competition at the same active site. Although the small subunit is not catalytic it is essential for maximal activity. The chain is Ribulose bisphosphate carboxylase small subunit, chloroplastic 3 from Mesembryanthemum crystallinum (Common ice plant).